Reading from the N-terminus, the 391-residue chain is Cathepsin E (391 aa).

A signal peptide spans 1 to 19 (MKTFLLLLLVLLELGQAPG). Residues 20–53 (ALHRVPLSRRESLRKKLRAQGQLTELWKSQNLNM) constitute a propeptide, activation peptide. The 314-residue stretch at 74–387 (YFGTISIGSP…DRGNNRVGLA (314 aa)) folds into the Peptidase A1 domain. A glycan (N-linked (GlcNAc...) asparagine) is linked at Asn-86. Asp-92 is an active-site residue. Disulfide bonds link Cys-105/Cys-110 and Cys-267/Cys-271. Asp-276 is a catalytic residue. Cysteines 309 and 346 form a disulfide.

The protein belongs to the peptidase A1 family. In terms of assembly, homodimer; disulfide-linked. Glycosylated. The nature of the carbohydrate chain varies between cell types. In terms of tissue distribution, expressed abundantly in the surface and foveolar epithelial cells of the fundic and pyloric stomach mucosa, and at very low levels in the spleen.

The protein localises to the endosome. It catalyses the reaction Similar to cathepsin D, but slightly broader specificity.. May have a role in immune function. Probably involved in the processing of antigenic peptides during MHC class II-mediated antigen presentation. May play a role in activation-induced lymphocyte depletion in the thymus, and in neuronal degeneration and glial cell activation in the brain. The sequence is that of Cathepsin E (CTSE) from Cavia porcellus (Guinea pig).